The sequence spans 153 residues: Ribonuclease P protein component (153 aa).

This sequence belongs to the RnpA family. In terms of assembly, consists of a catalytic RNA component (M1 or rnpB) and a protein subunit.

The catalysed reaction is Endonucleolytic cleavage of RNA, removing 5'-extranucleotides from tRNA precursor.. Functionally, RNaseP catalyzes the removal of the 5'-leader sequence from pre-tRNA to produce the mature 5'-terminus. It can also cleave other RNA substrates such as 4.5S RNA. The protein component plays an auxiliary but essential role in vivo by binding to the 5'-leader sequence and broadening the substrate specificity of the ribozyme. This chain is Ribonuclease P protein component, found in Helicobacter acinonychis (strain Sheeba).